Consider the following 598-residue polypeptide: Elongation factor 4 (598 aa).

The tr-type G domain occupies 4 to 185 (KNIRNFSIIA…TIIAKIPPPK (182 aa)). GTP contacts are provided by residues 16–21 (DHGKST) and 132–135 (NKID).

It belongs to the TRAFAC class translation factor GTPase superfamily. Classic translation factor GTPase family. LepA subfamily.

Its subcellular location is the cell membrane. It carries out the reaction GTP + H2O = GDP + phosphate + H(+). Required for accurate and efficient protein synthesis under certain stress conditions. May act as a fidelity factor of the translation reaction, by catalyzing a one-codon backward translocation of tRNAs on improperly translocated ribosomes. Back-translocation proceeds from a post-translocation (POST) complex to a pre-translocation (PRE) complex, thus giving elongation factor G a second chance to translocate the tRNAs correctly. Binds to ribosomes in a GTP-dependent manner. The polypeptide is Elongation factor 4 (Mycoplasma genitalium (strain ATCC 33530 / DSM 19775 / NCTC 10195 / G37) (Mycoplasmoides genitalium)).